The primary structure comprises 200 residues: Probable UbiX-like flavin prenyltransferase (200 aa).

FMN contacts are provided by residues 9–11, S36, 87–90, and R122; these read GAT and SMKT.

This sequence belongs to the UbiX/PAD1 family. YclB subfamily. In terms of assembly, homododecamer.

It carries out the reaction dimethylallyl phosphate + FMNH2 = prenylated FMNH2 + phosphate. In terms of biological role, involved in the non-oxidative decarboxylation and detoxification of phenolic derivatives under both aerobic and anaerobic conditions. Flavin prenyltransferase that catalyzes the synthesis of the prenylated FMN cofactor (prenyl-FMN) for phenolic acid decarboxylase. This chain is Probable UbiX-like flavin prenyltransferase, found in Streptomyces sp. (strain D7).